A 146-amino-acid chain; its full sequence is Large ribosomal subunit protein uL15 (146 aa).

Residues 1 to 10 (MRLNQLSPSA) show a composition bias toward polar residues. A disordered region spans residues 1-54 (MRLNQLSPSAGSRPDAKRAGRGAGSGLGKTAGRGHKGQHSRSGGFHKVGFEGGQ). Positions 21-31 (RGAGSGLGKTA) are enriched in gly residues.

This sequence belongs to the universal ribosomal protein uL15 family. As to quaternary structure, part of the 50S ribosomal subunit.

Binds to the 23S rRNA. In Halorhodospira halophila (strain DSM 244 / SL1) (Ectothiorhodospira halophila (strain DSM 244 / SL1)), this protein is Large ribosomal subunit protein uL15.